A 63-amino-acid polypeptide reads, in one-letter code: Alpha-toxin CsE5 (63 aa).

The 60-residue stretch at 2–61 (KDGYPVDSGNCKYECLKDDYCNDLCLERKADKGYCYWGKVSCYCYGLPDNSPTKTSGKCN) folds into the LCN-type CS-alpha/beta domain. 4 disulfides stabilise this stretch: C12–C60, C16–C36, C22–C43, and C26–C45.

The protein belongs to the long (4 C-C) scorpion toxin superfamily. Sodium channel inhibitor family. Alpha subfamily. As to expression, expressed by the venom gland.

The protein resides in the secreted. Alpha toxins bind voltage-independently at site-3 of sodium channels (Nav) and inhibit the inactivation of the activated channels, thereby blocking neuronal transmission. This Centruroides sculpturatus (Arizona bark scorpion) protein is Alpha-toxin CsE5.